Reading from the N-terminus, the 589-residue chain is C-type lectin domain family 4 member F (589 aa).

Residues 1–39 (MDGEAVRFCTDNQCVSLHPQEVDSVAMAPAAPKIPRLVQ) lie on the Cytoplasmic side of the membrane. The chain crosses the membrane as a helical; Signal-anchor for type II membrane protein span at residues 40 to 60 (ATPAFMAVTLVFSLVTLFVVV). The Extracellular portion of the chain corresponds to 61 to 589 (QQQTRPVPKP…TPPCPWILSN (529 aa)). Residues Asn79, Asn113, Asn207, Asn230, Asn244, Asn312, Asn385, and Asn399 are each glycosylated (N-linked (GlcNAc...) asparagine). One can recognise a C-type lectin domain in the interval 476–589 (NGGSLYYFSS…TPPCPWILSN (114 aa)).

The protein resides in the membrane. In terms of biological role, receptor with an affinity for galactose and fucose. Could be involved in endocytosis. The chain is C-type lectin domain family 4 member F (CLEC4F) from Homo sapiens (Human).